Consider the following 158-residue polypeptide: NADH-quinone oxidoreductase subunit B (158 aa).

Residues cysteine 37, cysteine 38, cysteine 102, and cysteine 132 each contribute to the [4Fe-4S] cluster site.

The protein belongs to the complex I 20 kDa subunit family. In terms of assembly, NDH-1 is composed of 14 different subunits. Subunits NuoB, C, D, E, F, and G constitute the peripheral sector of the complex. [4Fe-4S] cluster serves as cofactor.

The protein resides in the cell inner membrane. The catalysed reaction is a quinone + NADH + 5 H(+)(in) = a quinol + NAD(+) + 4 H(+)(out). Functionally, NDH-1 shuttles electrons from NADH, via FMN and iron-sulfur (Fe-S) centers, to quinones in the respiratory chain. Couples the redox reaction to proton translocation (for every two electrons transferred, four hydrogen ions are translocated across the cytoplasmic membrane), and thus conserves the redox energy in a proton gradient. The polypeptide is NADH-quinone oxidoreductase subunit B (Bordetella parapertussis (strain 12822 / ATCC BAA-587 / NCTC 13253)).